The chain runs to 492 residues: Ketol-acid reductoisomerase (NADP(+)) (492 aa).

In terms of domain architecture, KARI N-terminal Rossmann spans alanine 15–phenylalanine 208. Residues cysteine 45–glutamine 48, arginine 68, arginine 76, serine 78, and aspartate 108–glutamine 110 each bind NADP(+). The active site involves histidine 132. Glycine 158 serves as a coordination point for NADP(+). 2 KARI C-terminal knotted domains span residues serine 209–glutamine 344 and phenylalanine 345–methionine 485. Residues aspartate 217, glutamate 221, glutamate 389, and glutamate 393 each contribute to the Mg(2+) site. Serine 414 provides a ligand contact to substrate.

It belongs to the ketol-acid reductoisomerase family. The cofactor is Mg(2+).

It catalyses the reaction (2R)-2,3-dihydroxy-3-methylbutanoate + NADP(+) = (2S)-2-acetolactate + NADPH + H(+). It carries out the reaction (2R,3R)-2,3-dihydroxy-3-methylpentanoate + NADP(+) = (S)-2-ethyl-2-hydroxy-3-oxobutanoate + NADPH + H(+). Its pathway is amino-acid biosynthesis; L-isoleucine biosynthesis; L-isoleucine from 2-oxobutanoate: step 2/4. It participates in amino-acid biosynthesis; L-valine biosynthesis; L-valine from pyruvate: step 2/4. Its function is as follows. Involved in the biosynthesis of branched-chain amino acids (BCAA). Catalyzes an alkyl-migration followed by a ketol-acid reduction of (S)-2-acetolactate (S2AL) to yield (R)-2,3-dihydroxy-isovalerate. In the isomerase reaction, S2AL is rearranged via a Mg-dependent methyl migration to produce 3-hydroxy-3-methyl-2-ketobutyrate (HMKB). In the reductase reaction, this 2-ketoacid undergoes a metal-dependent reduction by NADPH to yield (R)-2,3-dihydroxy-isovalerate. This is Ketol-acid reductoisomerase (NADP(+)) from Yersinia pestis bv. Antiqua (strain Antiqua).